The following is a 512-amino-acid chain: Serine palmitoyltransferase 3 (512 aa).

At K345 the chain carries N6-(pyridoxal phosphate)lysine.

The protein belongs to the class-II pyridoxal-phosphate-dependent aminotransferase family. In terms of assembly, heterodimer of sptl-1/sptl-3. Pyridoxal 5'-phosphate is required as a cofactor.

The enzyme catalyses L-serine + hexadecanoyl-CoA + H(+) = 3-oxosphinganine + CO2 + CoA. The protein operates within lipid metabolism; sphingolipid metabolism. Functionally, component of the serine palmitoyltransferase (SPT) that catalyzes the first committed step in sphingolipid biosynthesis, which is the condensation of an acyl-CoA species and L-serine. The catalytic core is composed of a heterodimer of sptl-1 and sptl-2 or sptl-1 and sptl-3. Required for the specification of abicobasal polarity and development of the gut lumen. The chain is Serine palmitoyltransferase 3 (sptl-3) from Caenorhabditis elegans.